A 241-amino-acid polypeptide reads, in one-letter code: Probable 2-phosphosulfolactate phosphatase (241 aa).

Belongs to the ComB family. The cofactor is Mg(2+).

The enzyme catalyses (2R)-O-phospho-3-sulfolactate + H2O = (2R)-3-sulfolactate + phosphate. This is Probable 2-phosphosulfolactate phosphatase from Gloeothece citriformis (strain PCC 7424) (Cyanothece sp. (strain PCC 7424)).